Here is a 250-residue protein sequence, read N- to C-terminus: NAD(P)H-quinone oxidoreductase subunit S, chloroplastic (250 aa).

The transit peptide at methionine 1–lysine 48 directs the protein to the chloroplast. Lysine 52 participates in a covalent cross-link: Glycyl lysine isopeptide (Lys-Gly) (interchain with G-Cter in ubiquitin). 2 stretches are compositionally biased toward basic and acidic residues: residues glutamine 76–glutamate 94 and valine 106–methionine 115. Disordered stretches follow at residues glutamine 76–alanine 163 and arginine 222–proline 250. Residues asparagine 136–alanine 146 show a composition bias toward pro residues.

In terms of assembly, part of the chloroplast NDH complex, composed of a mixture of chloroplast and nucleus encoded subunits. Component of the electron donor-binding subcomplex, at least composed of NDHS, NDHT and NDHU. Interacts with the NDH subcomplex A via the protein NDHT and NDHU. In terms of processing, arg-193 is the critical site for the high affinity binding of NDH to ferredoxin.

It is found in the plastid. Its subcellular location is the chloroplast thylakoid membrane. It catalyses the reaction a plastoquinone + NADH + (n+1) H(+)(in) = a plastoquinol + NAD(+) + n H(+)(out). The enzyme catalyses a plastoquinone + NADPH + (n+1) H(+)(in) = a plastoquinol + NADP(+) + n H(+)(out). Functionally, NDH shuttles electrons from NAD(P)H:plastoquinone, via FMN and iron-sulfur (Fe-S) centers, to quinones in the photosynthetic chain and possibly in a chloroplast respiratory chain. The immediate electron acceptor for the enzyme in this species is believed to be plastoquinone. Couples the redox reaction to proton translocation, and thus conserves the redox energy in a proton gradient. Required for the efficient operation of ferredoxin-dependent plastoquinone reduction. Forms the electron donor-binding subcomplex in association with the NDHT and NDHU subunits. The chain is NAD(P)H-quinone oxidoreductase subunit S, chloroplastic from Arabidopsis thaliana (Mouse-ear cress).